The sequence spans 249 residues: 2,3-bisphosphoglycerate-dependent phosphoglycerate mutase (249 aa).

Residues 8 to 15, 21 to 22, R60, 87 to 90, K98, 114 to 115, and 183 to 184 contribute to the substrate site; these read RHGESIWN, TG, ERHY, RR, and GN. H9 (tele-phosphohistidine intermediate) is an active-site residue. E87 functions as the Proton donor/acceptor in the catalytic mechanism.

The protein belongs to the phosphoglycerate mutase family. BPG-dependent PGAM subfamily.

It catalyses the reaction (2R)-2-phosphoglycerate = (2R)-3-phosphoglycerate. It functions in the pathway carbohydrate degradation; glycolysis; pyruvate from D-glyceraldehyde 3-phosphate: step 3/5. Catalyzes the interconversion of 2-phosphoglycerate and 3-phosphoglycerate. The sequence is that of 2,3-bisphosphoglycerate-dependent phosphoglycerate mutase from Caldanaerobacter subterraneus subsp. tengcongensis (strain DSM 15242 / JCM 11007 / NBRC 100824 / MB4) (Thermoanaerobacter tengcongensis).